A 1242-amino-acid chain; its full sequence is ATP-dependent RNA helicase DHX8 (1242 aa).

Disordered stretches follow at residues 75–283 (RPSR…DDPE) and 354–449 (SMKE…GLLP). Basic and acidic residues-rich tracts occupy residues 87 to 97 (TVGDKKEDKKS), 113 to 141 (YSKKEESDDDEKVKAKPEKHSETHKKTDM), and 180 to 196 (RDRDTKRRSRSREDRHS). 2 stretches are compositionally biased toward basic residues: residues 197 to 222 (DRRRSRSRDKERRRRSRSRDNRRRSR) and 232 to 252 (DRRHKSSSSRDHHERRRRSRS). Positions 253–269 (RSTERRDRRDRSRDCSE) are enriched in basic and acidic residues. In terms of domain architecture, S1 motif spans 285 to 356 (GKIYSGKIAN…TGQKVSLSMK (72 aa)). The span at 388 to 399 (FSSSTSMLNLQG) shows a compositional bias: polar residues. Residues 439 to 449 (PDFDEETGLLP) show a composition bias toward acidic residues. Residues 596-759 (IKAVTDNQIL…FFKAPIFTIP (164 aa)) form the Helicase ATP-binding domain. 609 to 616 (GETGSGKT) contributes to the ATP binding site. The short motif at 706-709 (DEAH) is the DEAH box element. In terms of domain architecture, Helicase C-terminal spans 777 to 957 (YLDASLITVM…TTVLQLKTMG (181 aa)).

It belongs to the DEAD box helicase family. DEAH subfamily. DDX8/PRP22 sub-subfamily. In terms of assembly, identified in the spliceosome C complex.

Its subcellular location is the nucleus. It catalyses the reaction ATP + H2O = ADP + phosphate + H(+). Functionally, involved in pre-mRNA splicing as component of the spliceosome. Facilitates nuclear export of spliced mRNA by releasing the RNA from the spliceosome. Before and after egg-chamber formation, required for nurse-cell chromatin dispersal (NCCD) probably by playing a role in spliceosome localization to chromatin/interchromatin spaces. In Drosophila melanogaster (Fruit fly), this protein is ATP-dependent RNA helicase DHX8.